A 540-amino-acid chain; its full sequence is Glucose-6-phosphate isomerase (540 aa).

Glutamate 346 acts as the Proton donor in catalysis. Catalysis depends on residues histidine 377 and lysine 505.

This sequence belongs to the GPI family.

It is found in the cytoplasm. The enzyme catalyses alpha-D-glucose 6-phosphate = beta-D-fructose 6-phosphate. The protein operates within carbohydrate biosynthesis; gluconeogenesis. It functions in the pathway carbohydrate degradation; glycolysis; D-glyceraldehyde 3-phosphate and glycerone phosphate from D-glucose: step 2/4. In terms of biological role, catalyzes the reversible isomerization of glucose-6-phosphate to fructose-6-phosphate. This chain is Glucose-6-phosphate isomerase, found in Francisella tularensis subsp. holarctica (strain FTNF002-00 / FTA).